Reading from the N-terminus, the 232-residue chain is Phosphatidylserine decarboxylase proenzyme (232 aa).

Residue serine 190 is the Schiff-base intermediate with substrate; via pyruvic acid of the active site. Serine 190 bears the Pyruvic acid (Ser); by autocatalysis mark.

Belongs to the phosphatidylserine decarboxylase family. PSD-A subfamily. Heterodimer of a large membrane-associated beta subunit and a small pyruvoyl-containing alpha subunit. The cofactor is pyruvate. In terms of processing, is synthesized initially as an inactive proenzyme. Formation of the active enzyme involves a self-maturation process in which the active site pyruvoyl group is generated from an internal serine residue via an autocatalytic post-translational modification. Two non-identical subunits are generated from the proenzyme in this reaction, and the pyruvate is formed at the N-terminus of the alpha chain, which is derived from the carboxyl end of the proenzyme. The post-translation cleavage follows an unusual pathway, termed non-hydrolytic serinolysis, in which the side chain hydroxyl group of the serine supplies its oxygen atom to form the C-terminus of the beta chain, while the remainder of the serine residue undergoes an oxidative deamination to produce ammonia and the pyruvoyl prosthetic group on the alpha chain.

The protein localises to the cell membrane. It carries out the reaction a 1,2-diacyl-sn-glycero-3-phospho-L-serine + H(+) = a 1,2-diacyl-sn-glycero-3-phosphoethanolamine + CO2. It participates in phospholipid metabolism; phosphatidylethanolamine biosynthesis; phosphatidylethanolamine from CDP-diacylglycerol: step 2/2. Its function is as follows. Catalyzes the formation of phosphatidylethanolamine (PtdEtn) from phosphatidylserine (PtdSer). In Bartonella henselae (strain ATCC 49882 / DSM 28221 / CCUG 30454 / Houston 1) (Rochalimaea henselae), this protein is Phosphatidylserine decarboxylase proenzyme.